Reading from the N-terminus, the 597-residue chain is MSSGYSSAPSVSHTSSEADLNRIESYEDGVDEEASDEQRMCGLSELVTSCLTSSKSSRQKDSFEDDDDVPIEIVGTLKKSKSKKKKQCPPNITIEKKNGNSSPFLKSSQFTDVPPTIRFYTKGTKVTKPARKIQSRLTWCHNSLLPIVMRQTLSASHFTIVDESLFHIGYWGRHLKSAQYKALQPHQKVNHFPGAFHIGRKDRLWMHIRNRLEHFGEEFEIMPFTYILPTDRQELLKYLETDVNRHVIIKPPASARGSGITVTRKPKDFPTTATLVAQHYIERPLTINRAKFDLRLYAYVPTFEPLRVYIYDQGLVRFASVPYNPSVTNISNKYMHLTNYSINKLAEADGIANKPVPKWALHQLWDYFDQMGVNSQKIQKEIEDVIVKAFISCEKPIREHMSRFLEQEFICYELFGIDIILDEDYKPWLLEVNISPSLHSGTSLDVSVKAPLAKDVLNLAGIHVPPSFDKLHTADYSCRPRNGTKTREQLVKEASWVAAYRDQHGAIDNRIFKRLTPEDTRALVEFEDELDRIGDFKLVFPTAQTAHYQKFFAEPIYMNILLQQWQIAQEGDRSIGIDRLEQLCRQKHMQSDQEISF.

Residues 1–18 (MSSGYSSAPSVSHTSSEA) are compositionally biased toward polar residues. Disordered regions lie at residues 1-39 (MSSGYSSAPSVSHTSSEADLNRIESYEDGVDEEASDEQR) and 80-107 (SKSKKKKQCPPNITIEKKNGNSSPFLKS). The segment covering 26–35 (YEDGVDEEAS) has biased composition (acidic residues). The TTL domain maps to 134–472 (QSRLTWCHNS…HVPPSFDKLH (339 aa)). ATP is bound by residues K250, 256–257 (RG), 278–281 (QHYI), and 291–293 (KFD). Residue R256 coordinates a protein. An L-glutamate-binding site is contributed by R317. 338 to 339 (TN) is an ATP binding site. 3 residues coordinate L-glutamate: Y340, S341, and K358. Residues D418, E431, and N433 each coordinate Mg(2+). K449 lines the L-glutamate pocket.

The protein belongs to the tubulin--tyrosine ligase family. The cofactor is Mg(2+).

The catalysed reaction is L-glutamyl-[protein] + L-glutamate + ATP = gamma-L-glutamyl-L-glutamyl-[protein] + ADP + phosphate + H(+). In terms of biological role, monoglutamylase which modifies tubulin, adding a single glutamate on the gamma-carboxyl group of specific glutamate residues of target proteins. Involved in the side-chain initiation step of the polyglutamylation reaction but not in the elongation step. Preferentially modifies beta-tail tubulin over the alpha-tubulin. Involved in side-chain glutamylation of tubulin in sensory cilia. Together with ttll-5 and ttll-11, required for male mating. The polypeptide is Tubulin polyglutamylase ttll-4 (ttll-4) (Caenorhabditis briggsae).